Consider the following 338-residue polypeptide: Phenylalanine--tRNA ligase alpha subunit (338 aa).

Glutamate 259 contributes to the Mg(2+) binding site.

It belongs to the class-II aminoacyl-tRNA synthetase family. Phe-tRNA synthetase alpha subunit type 1 subfamily. In terms of assembly, tetramer of two alpha and two beta subunits. Requires Mg(2+) as cofactor.

The protein resides in the cytoplasm. It catalyses the reaction tRNA(Phe) + L-phenylalanine + ATP = L-phenylalanyl-tRNA(Phe) + AMP + diphosphate + H(+). In Herminiimonas arsenicoxydans, this protein is Phenylalanine--tRNA ligase alpha subunit.